Reading from the N-terminus, the 421-residue chain is Enolase (421 aa).

Residue glutamate 207 is the Proton donor of the active site. Residues aspartate 244, glutamate 285, and aspartate 312 each coordinate Mg(2+). Catalysis depends on lysine 337, which acts as the Proton acceptor. Positions 337, 366, 367, and 388 each coordinate (2R)-2-phosphoglycerate.

The protein belongs to the enolase family. Mg(2+) serves as cofactor.

It localises to the cytoplasm. It is found in the secreted. The protein resides in the cell surface. The catalysed reaction is (2R)-2-phosphoglycerate = phosphoenolpyruvate + H2O. Its pathway is carbohydrate degradation; glycolysis; pyruvate from D-glyceraldehyde 3-phosphate: step 4/5. Catalyzes the reversible conversion of 2-phosphoglycerate (2-PG) into phosphoenolpyruvate (PEP). It is essential for the degradation of carbohydrates via glycolysis. In Ehrlichia ruminantium (strain Gardel), this protein is Enolase.